A 461-amino-acid polypeptide reads, in one-letter code: Kynurenine 3-monooxygenase (461 aa).

FAD contacts are provided by residues 17–18 (LA), 37–39 (ERR), and alanine 56. Residues arginine 84 and tyrosine 98 each coordinate L-kynurenine. Residues arginine 111, leucine 135, aspartate 311, and 324 to 325 (MN) contribute to the FAD site. Positions 369 and 404 each coordinate L-kynurenine.

The protein belongs to the aromatic-ring hydroxylase family. KMO subfamily. It depends on FAD as a cofactor.

The catalysed reaction is L-kynurenine + NADPH + O2 + H(+) = 3-hydroxy-L-kynurenine + NADP(+) + H2O. It functions in the pathway cofactor biosynthesis; NAD(+) biosynthesis; quinolinate from L-kynurenine: step 1/3. Its pathway is siderophore biosynthesis; quinolobactin biosynthesis. Functionally, catalyzes the hydroxylation of L-kynurenine (L-Kyn) to form 3-hydroxy-L-kynurenine (L-3OHKyn). Probably required for the synthesis of quinolinic acid and the siderophore quinolobactin. The sequence is that of Kynurenine 3-monooxygenase from Pseudomonas fluorescens.